A 66-amino-acid polypeptide reads, in one-letter code: MKANEIRDLTTAEIEQKVKSLKEELFNLRFQLATGQLENTARIREVRKSIARMKTVIREREIAANK.

Belongs to the universal ribosomal protein uL29 family.

This Bacillus licheniformis (strain ATCC 14580 / DSM 13 / JCM 2505 / CCUG 7422 / NBRC 12200 / NCIMB 9375 / NCTC 10341 / NRRL NRS-1264 / Gibson 46) protein is Large ribosomal subunit protein uL29.